The primary structure comprises 505 residues: Cytochrome P450 CYP71D313 (505 aa).

A helical membrane pass occupies residues 1-21; that stretch reads MELQFPLFSIFFVTILFFFLF. Cys-441 serves as a coordination point for heme. The helical transmembrane segment at 442 to 462 threads the bilayer; it reads PGIAFGIATIELPLALLLYHF.

The protein belongs to the cytochrome P450 family. Heme serves as cofactor.

It localises to the membrane. Functionally, probable heme-thiolate monooxygenase. The protein is Cytochrome P450 CYP71D313 of Panax ginseng (Korean ginseng).